A 658-amino-acid chain; its full sequence is Cysteine-rich receptor-like protein kinase 36 (658 aa).

The signal sequence occupies residues 1–26 (MERSNLFHIPCFLLLFLLFNINGVHT). Gnk2-homologous domains lie at 27–128 (TFVC…NIHR) and 139–246 (NVPH…DYRF). The Extracellular segment spans residues 27 to 281 (TFVCGDEDFS…KKGRMFQPWS (255 aa)). Residues asparagine 38, asparagine 64, asparagine 116, asparagine 150, and asparagine 163 are each glycosylated (N-linked (GlcNAc...) asparagine). The helical transmembrane segment at 282–302 (VVVVVFPTGINLAVFVAFVLA) threads the bilayer. Residues 303 to 658 (YRRMRRRIYT…EVSITVLYPR (356 aa)) lie on the Cytoplasmic side of the membrane. The 273-residue stretch at 340 to 612 (FSLENKLGQG…ITWLARDGTF (273 aa)) folds into the Protein kinase domain. ATP-binding positions include 346–354 (LGQGGFGSV) and lysine 368. Phosphotyrosine is present on tyrosine 413. Catalysis depends on aspartate 465, which acts as the Proton acceptor. Position 469 is a phosphoserine (serine 469). Threonine 505 bears the Phosphothreonine mark. The residue at position 513 (tyrosine 513) is a Phosphotyrosine.

It belongs to the protein kinase superfamily. Ser/Thr protein kinase family. CRK subfamily. As to quaternary structure, interacts with CRK45. Post-translationally, autophosphorylated.

The protein resides in the cell membrane. It carries out the reaction L-seryl-[protein] + ATP = O-phospho-L-seryl-[protein] + ADP + H(+). The enzyme catalyses L-threonyl-[protein] + ATP = O-phospho-L-threonyl-[protein] + ADP + H(+). In terms of biological role, forms a complex with CRK45 that may negatively control abscisic acid (ABA) and osmotic stress signal transduction. Can phosphorylate CRK45 in vitro. This is Cysteine-rich receptor-like protein kinase 36 from Arabidopsis thaliana (Mouse-ear cress).